Reading from the N-terminus, the 379-residue chain is 2-dehydropantoate 2-reductase (379 aa).

NADP(+) is bound by residues 13-18 (GLGAMG) and asparagine 119. Residue asparagine 119 coordinates substrate. Lysine 224 (proton donor) is an active-site residue. Positions 228, 232, and 316 each coordinate substrate. Glutamate 328 is a binding site for NADP(+).

The protein belongs to the ketopantoate reductase family.

It catalyses the reaction (R)-pantoate + NADP(+) = 2-dehydropantoate + NADPH + H(+). It participates in cofactor biosynthesis; (R)-pantothenate biosynthesis; (R)-pantoate from 3-methyl-2-oxobutanoate: step 2/2. Functionally, catalyzes the NADPH-dependent reduction of ketopantoate into pantoic acid. The chain is 2-dehydropantoate 2-reductase (PAN5) from Saccharomyces cerevisiae (strain ATCC 204508 / S288c) (Baker's yeast).